Reading from the N-terminus, the 153-residue chain is Deoxyuridine 5'-triphosphate nucleotidohydrolase (153 aa).

DUMP-binding residues include Ser-75, Gly-88, Asp-91, Tyr-94, Lys-99, Arg-143, Phe-148, and Gly-149.

The protein belongs to the dUTPase family. In terms of assembly, homotrimer. The cofactor is Mg(2+).

It carries out the reaction dUTP + H2O = dUMP + diphosphate + H(+). It functions in the pathway pyrimidine metabolism; dUMP biosynthesis; dUMP from dCTP (dUTP route): step 2/2. Functionally, involved in nucleotide metabolism via production of dUMP, the immediate precursor of thymidine nucleotides, and decreases the intracellular concentration of dUTP so that uracil cannot be incorporated into DNA. In Eremothecium gossypii (strain ATCC 10895 / CBS 109.51 / FGSC 9923 / NRRL Y-1056) (Yeast), this protein is Deoxyuridine 5'-triphosphate nucleotidohydrolase (DUT1).